The primary structure comprises 457 residues: Putative zinc finger CCCH domain-containing protein 21 (457 aa).

4 disordered regions span residues 51–73, 102–130, 195–221, and 280–329; these read PTSS…ARAS, LESP…EKLL, TSPS…ERER, and RKQA…RLRV. A compositionally biased stretch (gly residues) spans 57–66; the sequence is DGGGGGGGGY. Residues 215 to 276 are a coiled coil; sequence ASAEREREVR…HLSLLLEELE (62 aa). C3H1-type zinc fingers lie at residues 382–409 and 419–447; these read AAKT…HGLQ and RYKT…HSPL.

The sequence is that of Putative zinc finger CCCH domain-containing protein 21 from Oryza sativa subsp. japonica (Rice).